Consider the following 665-residue polypeptide: T-cell differentiation antigen CD6 (665 aa).

A signal peptide spans 1–16 (MWLFLGIAGLLTAVLS). The Extracellular segment spans residues 17-398 (GLPSPAPSGQ…VKDKDSQGLT (382 aa)). Asparagine 29, asparagine 34, and asparagine 49 each carry an N-linked (GlcNAc...) asparagine glycan. 3 consecutive SRCR domains span residues 45–155 (IRLV…VTCA), 160–259 (VRLV…VVCS), and 264–360 (WRLT…VVCS). Intrachain disulfides connect cysteine 54–cysteine 87, cysteine 69–cysteine 143, cysteine 82–cysteine 154, cysteine 128–cysteine 136, cysteine 169–cysteine 203, cysteine 185–cysteine 248, cysteine 198–cysteine 258, cysteine 229–cysteine 239, cysteine 289–cysteine 349, cysteine 302–cysteine 359, and cysteine 329–cysteine 339. N-linked (GlcNAc...) asparagine glycosylation is found at asparagine 111 and asparagine 117. An N-linked (GlcNAc...) asparagine glycan is attached at asparagine 228. N-linked (GlcNAc...) asparagine glycosylation is found at asparagine 344 and asparagine 367. Residues 399 to 419 (LLILCIVLGILLLVSTIFIVI) traverse the membrane as a helical segment. Topologically, residues 420 to 665 (LLLRAKGQYA…EEDYDDIGAA (246 aa)) are cytoplasmic. The interval 536-665 (ADPRPCVADV…EEDYDDIGAA (130 aa)) is disordered. Composition is skewed to polar residues over residues 548–565 (RGSQ…TSSE) and 580–595 (NSQA…TEQP). Low complexity predominate over residues 608–621 (SGPSADDSSSTSSG). Residues 651-665 (SIDDDEEDYDDIGAA) are compositionally biased toward acidic residues. Tyrosine 659 bears the Phosphotyrosine mark.

In terms of assembly, interacts (via extracellular domain) with ALCAM/CD166 (via extracellular domain). Interacts with the TCR/CD3 complex subunit CD3E. Interacts (via tyrosine phosphorylated C-terminus) with LCP2 (via SH2 domain). Interacts (via glycosylated extracellular domain) with LGALS1 and LGALS3. Interaction with LGALS1 or LGALS3 inhibits interaction with ALCAM. Interacts with VAV1. After T-cell activation, becomes hyperphosphorylated on Ser and Thr residues. Phosphorylated on tyrosine residues in response to stimulation of the TCR complex. Post-translationally, glycosylated. As to expression, expressed predominantly in thymus, lymph node and spleen.

Its subcellular location is the cell membrane. Its function is as follows. Cell adhesion molecule that mediates cell-cell contacts and regulates T-cell responses via its interaction with ALCAM/CD166. Contributes to signaling cascades triggered by activation of the TCR/CD3 complex. Functions as a costimulatory molecule; promotes T-cell activation and proliferation. Contributes to the formation and maturation of the immunological synapse. Functions as a calcium-dependent pattern receptor that binds and aggregates both Gram-positive and Gram-negative bacteria. Binds both lipopolysaccharide (LPS) from Gram-negative bacteria and lipoteichoic acid from Gram-positive bacteria. LPS binding leads to the activation of signaling cascades and down-stream MAP kinases. Mediates activation of the inflammatory response and the secretion of pro-inflammatory cytokines in response to LPS. This chain is T-cell differentiation antigen CD6 (Cd6), found in Mus musculus (Mouse).